Here is a 470-residue protein sequence, read N- to C-terminus: Membrane-bound lytic murein transglycosylase F (470 aa).

Residues 1 to 21 (MLKEKLIIIITLVMLLCACDI) form the signal peptide. The interval 22–259 (QEQSTQLAQI…VLEEKYFGHV (238 aa)) is non-LT domain. The tract at residues 260–470 (RQFNYVNTLA…PKIGDEVEAK (211 aa)) is LT domain. Residue glutamate 304 is part of the active site.

This sequence in the N-terminal section; belongs to the bacterial solute-binding protein 3 family. It in the C-terminal section; belongs to the transglycosylase Slt family.

The protein resides in the cell outer membrane. It carries out the reaction Exolytic cleavage of the (1-&gt;4)-beta-glycosidic linkage between N-acetylmuramic acid (MurNAc) and N-acetylglucosamine (GlcNAc) residues in peptidoglycan, from either the reducing or the non-reducing ends of the peptidoglycan chains, with concomitant formation of a 1,6-anhydrobond in the MurNAc residue.. Murein-degrading enzyme that degrades murein glycan strands and insoluble, high-molecular weight murein sacculi, with the concomitant formation of a 1,6-anhydromuramoyl product. Lytic transglycosylases (LTs) play an integral role in the metabolism of the peptidoglycan (PG) sacculus. Their lytic action creates space within the PG sacculus to allow for its expansion as well as for the insertion of various structures such as secretion systems and flagella. This Pseudoalteromonas translucida (strain TAC 125) protein is Membrane-bound lytic murein transglycosylase F.